The following is a 132-amino-acid chain: Probable histone H2A.1 (132 aa).

Positions 1-22 (MAGRGKTLGSGSAKKATTRSSK) are disordered.

The protein belongs to the histone H2A family. As to quaternary structure, the nucleosome is a histone octamer containing two molecules each of H2A, H2B, H3 and H4 assembled in one H3-H4 heterotetramer and two H2A-H2B heterodimers. The octamer wraps approximately 147 bp of DNA. Not ubiquitinated. In terms of tissue distribution, low level of expression; mainly in roots. Found in the root cap cells and in non dividing tissues of the plant, including the root elongation and maturation zones and the leaf veins.

It is found in the nucleus. Its subcellular location is the chromosome. Functionally, core component of nucleosome. Nucleosomes wrap and compact DNA into chromatin, limiting DNA accessibility to the cellular machineries which require DNA as a template. Histones thereby play a central role in transcription regulation, DNA repair, DNA replication and chromosomal stability. DNA accessibility is regulated via a complex set of post-translational modifications of histones, also called histone code, and nucleosome remodeling. The sequence is that of Probable histone H2A.1 from Arabidopsis thaliana (Mouse-ear cress).